A 97-amino-acid polypeptide reads, in one-letter code: Protein ParC (97 aa).

This Escherichia coli protein is Protein ParC (parC).